A 203-amino-acid polypeptide reads, in one-letter code: MKNMCSNWWLSEHYSDKFVKESKKCKYRSRAWFKIDEIQKKNNIIKPGMVVLDIGSSPGGWSKYSSQKVGMSGKVIACDIDLMNPIPNVSFILGNIFEKITIKKIKKVKKKVHIILCDISPNITGLSIIDHSRWISLNNNILNICKYLLLKNGKLIIKSFNSVEIKNFCKKIENSFKKIKIFKPISSRSRSKEIYIVAVNYKL.

S-adenosyl-L-methionine-binding residues include Gly-59, Trp-61, Asp-79, Asn-95, and Asp-118. The Proton acceptor role is filled by Lys-158.

It belongs to the class I-like SAM-binding methyltransferase superfamily. RNA methyltransferase RlmE family.

Its subcellular location is the cytoplasm. It carries out the reaction uridine(2552) in 23S rRNA + S-adenosyl-L-methionine = 2'-O-methyluridine(2552) in 23S rRNA + S-adenosyl-L-homocysteine + H(+). Functionally, specifically methylates the uridine in position 2552 of 23S rRNA at the 2'-O position of the ribose in the fully assembled 50S ribosomal subunit. This is Ribosomal RNA large subunit methyltransferase E from Wigglesworthia glossinidia brevipalpis.